The primary structure comprises 461 residues: Deoxyguanosinetriphosphate triphosphohydrolase-like protein (461 aa).

The disordered stretch occupies residues 22 to 41 (ERFLPDPPREKDNRPPFRRD). Residues 24–41 (FLPDPPREKDNRPPFRRD) are compositionally biased toward basic and acidic residues. The region spanning 72–285 (RLTHSLEVAQ…MELADDIAYG (214 aa)) is the HD domain.

The protein belongs to the dGTPase family. Type 2 subfamily.

This is Deoxyguanosinetriphosphate triphosphohydrolase-like protein from Haemophilus influenzae (strain PittGG).